The sequence spans 129 residues: uncharacterized protein (129 aa).

The segment covering 86–96 (NDGFSSDDEPE) has biased composition (acidic residues). A disordered region spans residues 86–116 (NDGFSSDDEPEEHVILTEDNQGEPSETPQAT). Residues 103–116 (EDNQGEPSETPQAT) show a composition bias toward polar residues.

Belongs to the asfivirus D129L family.

This is an uncharacterized protein from African swine fever virus (strain Badajoz 1971 Vero-adapted) (Ba71V).